Reading from the N-terminus, the 437-residue chain is MGERLFESAEGSQCGETFTQVPEDMLNKKTLPGVKSCESGTCGEIFMGYSSFNRNIRTDTGHQPHKCQKFLEKPYKHKQRRKALSHSHCFRTHERPHTREKPFDCKECEKSFISPASIRRYMVTHSGDGPYKCKFCGKALDCLSLYLTHERTHTGEKRYECKQCGKAFSWHSSVRIHERTHTGEKPYECKECGKSFNFSSSFRRHERTHTGEKPYKCKECGKAFNCPSSFHRHERTHTGEKPYECKLYGKALSRLISFRRHMRMHTGERPHKCKICGKAFYSPSSFQRHERSHTGEKPYKCKQCGKAFTCSTSFQYHERTHTGEKPDGCKQCGKAFRSAKYIRIHGRTHTGEKPYECKQCGKAFHCVSSFHRHERTHAGEKPYECKHCGKAFTCSIYIRIHERIHTGEKPYQCKECGKAFIRSSYCRKHERTHTINI.

The C2H2-type 1; degenerate zinc-finger motif lies at 35 to 59; it reads KSCESGTCGEIFMGYSSFNRNIRTD. The C2H2-type 2; degenerate zinc-finger motif lies at 103-125; sequence FDCKECEKSFISPASIRRYMVTH. 11 C2H2-type zinc fingers span residues 131–153, 159–181, 187–209, 215–237, 243–265, 271–293, 299–321, 327–349, 355–377, 383–405, and 411–433; these read YKCKFCGKALDCLSLYLTHERTH, YECKQCGKAFSWHSSVRIHERTH, YECKECGKSFNFSSSFRRHERTH, YKCKECGKAFNCPSSFHRHERTH, YECKLYGKALSRLISFRRHMRMH, HKCKICGKAFYSPSSFQRHERSH, YKCKQCGKAFTCSTSFQYHERTH, DGCKQCGKAFRSAKYIRIHGRTH, YECKQCGKAFHCVSSFHRHERTH, YECKHCGKAFTCSIYIRIHERIH, and YQCKECGKAFIRSSYCRKHERTH.

This sequence belongs to the krueppel C2H2-type zinc-finger protein family.

The protein resides in the nucleus. Functionally, may be involved in transcriptional regulation. This is Zinc finger protein 491 (ZNF491) from Homo sapiens (Human).